A 1497-amino-acid chain; its full sequence is Collagen alpha-1(XVII) chain (1497 aa).

Disordered regions lie at residues 1 to 154 (MDVT…PSTR) and 167 to 186 (GSRS…LPIP). Residues 1-467 (MDVTKKNKRD…CGSCCSWWKW (467 aa)) are Cytoplasmic-facing. The interval 1-566 (MDVTKKNKRD…MMEQENGNLR (566 aa)) is nonhelical region (NC16). Residues 9–19 (RDGTEVTERIV) show a composition bias toward basic and acidic residues. 2 stretches are compositionally biased toward polar residues: residues 57 to 96 (LTHG…SPGS) and 169 to 183 (RSAS…SNTL). The necessary for interaction with DST and for the recruitment of DST to hemidesmosome stretch occupies residues 145–230 (RLQSASPSTR…WSSTLPAGSS (86 aa)). The helical; Signal-anchor for type II membrane protein transmembrane segment at 468–488 (LLGLLLTWLLLLGLLFGLIAL) threads the bilayer. Residues 489 to 1497 (AEEVRKLKAR…RRRRSIAVKP (1009 aa)) lie on the Extracellular side of the membrane. Serine 544 bears the Phosphoserine; by CK2 mark. Disordered regions lie at residues 562–1011 (NGNL…SSSG), 1209–1234 (GLSF…VSGA), and 1261–1316 (SFIV…TGGG). The interval 567–1482 (GSPGPKGDMG…KGEKGDKGDQ (916 aa)) is triple-helical region. Over residues 590 to 602 (PGIPGPLGHPGPQ) the composition is skewed to pro residues. Low complexity-rich tracts occupy residues 604–635 (PKGQ…RGEA), 661–673 (PGSV…SGSP), 735–748 (EPGA…AGPD), and 774–796 (DPGK…PGRP). Composition is skewed to pro residues over residues 820 to 841 (PGPP…PGPA), 858 to 881 (PPGP…PRGP), and 907 to 916 (PPGPPGPPGP). 2 stretches are compositionally biased toward low complexity: residues 936-946 (GFSTSGSSSFG) and 968-987 (PGVP…GSSS). Pro residues-rich tracts occupy residues 994–1004 (PPGPPGPPGPP), 1214–1228 (PGPP…PRGP), and 1266–1275 (PPGPPGPQGP). Over residues 1289 to 1312 (SRGSSSSSHSSSVRRGSSYSSSMS) the composition is skewed to low complexity. N-linked (GlcNAc...) asparagine glycosylation occurs at asparagine 1421. A disordered region spans residues 1434–1497 (GAIQGPPGQK…RRRRSIAVKP (64 aa)). Pro residues predominate over residues 1458–1469 (AGPPGHPGPPGP). Over residues 1472 to 1481 (HKGEKGDKGD) the composition is skewed to basic and acidic residues. A nonhelical region (NC1) region spans residues 1483–1497 (VYAGRRRRRSIAVKP). Basic residues predominate over residues 1486–1497 (GRRRRRSIAVKP).

In terms of assembly, homotrimers of alpha 1(XVII)chains. Interacts (via cytoplasmic region) with ITGB4 (via cytoplasmic region). Interacts (via cytoplasmic region) with DST isoform 3 (via N-terminus). Interacts (via N-terminus) with PLEC. Interacts (via cytoplasmic region) with DSP. In terms of processing, the intracellular/endo domain is disulfide-linked. Post-translationally, prolines at the third position of the tripeptide repeating unit (G-X-Y) are hydroxylated in some or all of the chains. The ectodomain is shedded from the surface of keratinocytes resulting in a 120-kDa soluble form, also named as 120 kDa linear IgA disease antigen. The shedding is mediated by membrane-bound metalloproteases. This cleavage is inhibited by phosphorylation at Ser-544. Detected in skin. In the cornea, it is detected in the epithelial basement membrane, the epithelial cells, and at a lower level in stromal cells (at protein level). Stratified squamous epithelia. Found in hemidesmosomes. Expressed in cornea, oral mucosa, esophagus, intestine, kidney collecting ducts, ureter, bladder, urethra and thymus but is absent in lung, blood vessels, skeletal muscle and nerves.

The protein resides in the cell junction. It is found in the hemidesmosome. Its subcellular location is the membrane. It localises to the secreted. The protein localises to the extracellular space. The protein resides in the extracellular matrix. It is found in the basement membrane. Its function is as follows. May play a role in the integrity of hemidesmosome and the attachment of basal keratinocytes to the underlying basement membrane. The 120 kDa linear IgA disease antigen is an anchoring filament component involved in dermal-epidermal cohesion. Is the target of linear IgA bullous dermatosis autoantibodies. The protein is Collagen alpha-1(XVII) chain (COL17A1) of Homo sapiens (Human).